Here is a 168-residue protein sequence, read N- to C-terminus: GTP-dependent dephospho-CoA kinase (168 aa).

GTP contacts are provided by Asp-40, Val-41, Val-42, Asp-59, and Glu-112.

It belongs to the GTP-dependent DPCK family.

The catalysed reaction is 3'-dephospho-CoA + GTP = GDP + CoA + H(+). It functions in the pathway cofactor biosynthesis; coenzyme A biosynthesis. Functionally, catalyzes the GTP-dependent phosphorylation of the 3'-hydroxyl group of dephosphocoenzyme A to form coenzyme A (CoA). The polypeptide is GTP-dependent dephospho-CoA kinase (Methanoregula boonei (strain DSM 21154 / JCM 14090 / 6A8)).